The chain runs to 258 residues: NH(3)-dependent NAD(+) synthetase (258 aa).

34–41 contributes to the ATP binding site; that stretch reads GLSGGIDS. Mg(2+) is bound at residue aspartate 40. Residue arginine 116 coordinates deamido-NAD(+). Threonine 136 serves as a coordination point for ATP. Glutamate 141 is a binding site for Mg(2+). Residues lysine 165 and serine 187 each coordinate ATP.

The protein belongs to the NAD synthetase family. In terms of assembly, homodimer.

It catalyses the reaction deamido-NAD(+) + NH4(+) + ATP = AMP + diphosphate + NAD(+) + H(+). The protein operates within cofactor biosynthesis; NAD(+) biosynthesis; NAD(+) from deamido-NAD(+) (ammonia route): step 1/1. In terms of biological role, catalyzes the ATP-dependent amidation of deamido-NAD to form NAD. Uses ammonia as a nitrogen source. The polypeptide is NH(3)-dependent NAD(+) synthetase (Fusobacterium nucleatum subsp. nucleatum (strain ATCC 25586 / DSM 15643 / BCRC 10681 / CIP 101130 / JCM 8532 / KCTC 2640 / LMG 13131 / VPI 4355)).